Here is a 324-residue protein sequence, read N- to C-terminus: Probable metal transport system membrane protein CPn_0346/CP_0414/CPj0346/CpB0353 (324 aa).

10 helical membrane passes run 1–21, 39–59, 64–84, 94–114, 125–145, 165–185, 201–221, 226–246, 252–272, and 286–306; these read MALGPSPYYGVSFFQFFSVFF, IQIIVFLAISCSGAFAGTFLV, AMYANAVSHTVLFGLVCVCLF, GTLTLAAMATAMLTGFLIYFI, STALVFSLLFSLSLVLLVFMT, EDIFPVTIVILANAVITIFAF, LGIPIRLVDYLIIFQLSACLV, AVGVLMALAFLIIPSLIAKVI, SLMAWSLVFSIGTAFLAPASS, and SGISVVFLTMMYIVVKFISYF.

Belongs to the ABC-3 integral membrane protein family.

It is found in the cell inner membrane. Functionally, part of an ATP-driven transport system CPn_0346/CPn_0347/CPn_0348/CPn_0349 for a metal. The sequence is that of Probable metal transport system membrane protein CPn_0346/CP_0414/CPj0346/CpB0353 from Chlamydia pneumoniae (Chlamydophila pneumoniae).